The sequence spans 707 residues: Kinesin-like protein KIN-13B (707 aa).

The region spanning 152 to 477 is the Kinesin motor domain; it reads KIKVVVRKRP…LRYADRVKSL (326 aa). 243-250 provides a ligand contact to ATP; it reads GQTGSGKT. Residues 619-656 are a coiled coil; that stretch reads EHLNELLQEEEDLVSAHRKQVEETLDMIKEEMNLLVEA.

Belongs to the TRAFAC class myosin-kinesin ATPase superfamily. Kinesin family. KIN-13 subfamily.

In Oryza sativa subsp. japonica (Rice), this protein is Kinesin-like protein KIN-13B.